Reading from the N-terminus, the 234-residue chain is Thymidylate kinase (234 aa).

Position 10 to 17 (10 to 17 (GGEGSGKT)) interacts with ATP.

It belongs to the thymidylate kinase family.

The catalysed reaction is dTMP + ATP = dTDP + ADP. Functionally, phosphorylation of dTMP to form dTDP in both de novo and salvage pathways of dTTP synthesis. This chain is Thymidylate kinase, found in Cyanothece sp. (strain PCC 7425 / ATCC 29141).